Consider the following 293-residue polypeptide: Group 3 late-embryogenesis abundant protein, mitochondrial (293 aa).

The N-terminal 31 residues, 1-31 (MFLARNAGRAGYRGVVAYQQAASFSVSSAKA), are a transit peptide targeting the mitochondrion. The span at 27–43 (SSAKAAGSRSSGGSDAG) shows a compositional bias: low complexity. Residues 27 to 52 (SSAKAAGSRSSGGSDAGDYAREAAEH) form a disordered region. LEA 11-mer repeat repeat units follow at residues 58-68 (KDLKNEASWKA), 83-93 (KDTVKEGVHDM), 123-133 (KNAAQDTAATL), 134-144 (KDKAGSAWNQA), 145-155 (KHVVEDKGEDV), 160-170 (KDTASKVWGKA), 171-181 (KHVAEDVKENA), 199-209 (KDKAADVLSGA), and 210-220 (KHTAENLAHKA). Residues 217-293 (AHKAQAAIHD…KGPGQAGGRR (77 aa)) are disordered. Low complexity predominate over residues 230 to 265 (SSGSQSQSQSQSQYRQGQQQGRQDQQQSKSQWGQTS). Gly residues predominate over residues 279–293 (GPQGGKGPGQAGGRR).

This sequence belongs to the LEA type 4 family.

Its subcellular location is the mitochondrion. Mitochondrial heat soluble protein acting as a molecular shield in water-deficient condition. The chain is Group 3 late-embryogenesis abundant protein, mitochondrial from Ramazzottius varieornatus (Water bear).